Reading from the N-terminus, the 489-residue chain is Endothelial zinc finger protein induced by tumor necrosis factor alpha (489 aa).

The span at 1-15 (MKELDPKNDISEDKL) shows a compositional bias: basic and acidic residues. Disordered stretches follow at residues 1-61 (MKEL…PLGI) and 98-122 (EKGA…KPPM). 13 consecutive C2H2-type zinc fingers follow at residues 130–152 (YDCS…QRIH), 158–180 (FECD…QRVH), 186–208 (YACG…QRTH), 214–236 (YVCD…ERIH), 242–264 (YACG…QRTH), 270–292 (YVCP…QRTH), 298–320 (YACK…QRNH), 326–348 (YVCG…QRFH), 354–376 (FECS…QRIH), 382–404 (YECY…QIVH), 410–432 (YVCG…QRIH), 438–460 (YRCG…QRIH), and 466–488 (YRCG…LRIH).

The protein belongs to the krueppel C2H2-type zinc-finger protein family. In terms of tissue distribution, highly expressed in placenta, followed by brain, testis, pancreas, heart, small intestine, muscle, uterus, prostate and peripheral blood leukocytes. Not detected in liver, lung, colon, stomach, salivary and thyroid gland.

Its subcellular location is the nucleus. May be involved in transcriptional regulation. The polypeptide is Endothelial zinc finger protein induced by tumor necrosis factor alpha (ZNF71) (Homo sapiens (Human)).